The primary structure comprises 215 residues: Reticulon-like protein B14 (215 aa).

Residues 31-211 (FADIMFWKNK…NKIPKAQAKT (181 aa)) enclose the Reticulon domain. 3 helical membrane passes run 41 to 61 (KESG…EVVE), 62 to 82 (YPFI…FLIW), and 141 to 161 (LWIL…YIVF).

The protein resides in the endoplasmic reticulum membrane. This Arabidopsis thaliana (Mouse-ear cress) protein is Reticulon-like protein B14 (RTNLB14).